The chain runs to 924 residues: Lipoxygenase 7, chloroplastic (924 aa).

The transit peptide at 1–61 (MLRPQLNPSS…GQGSSRVVVV (61 aa)) directs the protein to the chloroplast. Residues 88 to 218 (AVATIKVTVG…VGDEGTPSKR (131 aa)) form the PLAT domain. The Lipoxygenase domain occupies 225-924 (TYLPGQTPAG…GMGIPNSTSI (700 aa)). A disordered region spans residues 231–315 (TPAGLRSYRK…PKSETRKGNV (85 aa)). 2 stretches are compositionally biased toward basic and acidic residues: residues 239–262 (RKNDLQQKRGDGTGEREADDRVYD) and 302–315 (SKKDPKSETRKGNV). Fe cation-binding residues include His-581, His-586, His-773, Asn-777, and Ile-924.

It belongs to the lipoxygenase family. Requires Fe cation as cofactor.

The protein resides in the plastid. It localises to the chloroplast. The catalysed reaction is (9Z,12Z)-octadecadienoate + O2 = (13S)-hydroperoxy-(9Z,11E)-octadecadienoate. The enzyme catalyses (9Z,12Z,15Z)-octadecatrienoate + O2 = (13S)-hydroperoxy-(9Z,11E,15Z)-octadecatrienoate. Its pathway is lipid metabolism; oxylipin biosynthesis. Plant lipoxygenase may be involved in a number of diverse aspects of plant physiology including growth and development, pest resistance, and senescence or responses to wounding. This lipoxygenase introduces molecular oxygen exclusively into the C-13 position of linoleic and linolenic acids. This chain is Lipoxygenase 7, chloroplastic (CM-LOX1), found in Oryza sativa subsp. japonica (Rice).